The chain runs to 275 residues: HUWE1-associated protein modifying stress responses (275 aa).

The segment covering 32–44 has biased composition (acidic residues); that stretch reads AEQDEQLSPELQE. 4 disordered regions span residues 32-51, 155-181, 204-228, and 250-275; these read AEQDEQLSPELQEEAAAAAQ, RNSRAPPRLTVVSPNRATSTETSSSVE, SVRSSTPGSPTHVSSGPNASRRRNG, and GTRKRTSAQCGDVITDSPTHKRNRML. Phosphoserine is present on serine 167. Over residues 172–181 the composition is skewed to low complexity; the sequence is TSTETSSSVE. A compositionally biased stretch (polar residues) spans 204–221; that stretch reads SVRSSTPGSPTHVSSGPN. Position 212 is a phosphoserine (serine 212).

Belongs to the HAPSTR1 family. In terms of assembly, homooligomer. Heterooligomer with HAPSTR2; the interaction is direct and stabilizes HAPSTR1. Interacts with HUWE1. In terms of processing, ubiquitinated by HUWE1. Promotes HAPSTR1 degradation through polyubiquitination.

It localises to the nucleus. It is found in the cytoplasm. Its function is as follows. Acts as a central player within a network of stress response pathways promoting cellular adaptability. The E3 ligase HUWE1 assists HAPSTR1 in controlling stress signaling and in turn, HUWE1 feeds back to promote the degradation of HAPSTR1. HAPSTR1 represents a central coordination mechanism for stress response programs. Functions as a negative regulator of TP53/P53 in the cellular response to telomere erosion and probably also DNA damage. May attenuate p53/TP53 activation through the E3 ubiquitin ligase HUWE1. The polypeptide is HUWE1-associated protein modifying stress responses (Mus musculus (Mouse)).